The following is a 91-amino-acid chain: Alpha-latrotoxin associated low molecular weight protein SGV150-311 (91 aa).

An N-terminal signal peptide occupies residues 1–18 (MNVLHFLILLMSVVSVFC).

This sequence belongs to the arthropod CHH/MIH/GIH/VIH hormone family. Expressed by the venom gland.

The protein localises to the secreted. Its function is as follows. May increase the toxicity of alpha-latrotoxin and/or other venom components. Is non-toxic to mice and to the cockroach Periplaneta americana. In Steatoda grossa (False black widow), this protein is Alpha-latrotoxin associated low molecular weight protein SGV150-311.